The following is a 584-amino-acid chain: Major capsid protein (584 aa).

The protein belongs to the NCLDV major capsid protein family.

It localises to the virion. Major protein of the capsid. In Haptolina ericina (CeV01), this protein is Major capsid protein (MCP).